The chain runs to 233 residues: Large ribosomal subunit protein uL1 (233 aa).

It belongs to the universal ribosomal protein uL1 family. As to quaternary structure, part of the 50S ribosomal subunit.

Its function is as follows. Binds directly to 23S rRNA. The L1 stalk is quite mobile in the ribosome, and is involved in E site tRNA release. In terms of biological role, protein L1 is also a translational repressor protein, it controls the translation of the L11 operon by binding to its mRNA. This is Large ribosomal subunit protein uL1 from Psychrobacter sp. (strain PRwf-1).